A 437-amino-acid polypeptide reads, in one-letter code: Protein farnesyltransferase subunit beta (437 aa).

PFTB repeat units follow at residues 123-164, 174-215, 222-263, 270-312, and 332-374; these read ATDV…CIIG, REKL…SLTN, FEGT…VILK, LKSL…PLLH, and QQAL…SIAQ. (2E,6E)-farnesyl diphosphate contacts are provided by residues 248–251 and 291–294; these read HGGY and RCNK. Zn(2+) contacts are provided by Asp297 and Cys299. 300–303 serves as a coordination point for (2E,6E)-farnesyl diphosphate; that stretch reads YSFW. Residue His362 coordinates Zn(2+). The residue at position 436 (Thr436) is a Phosphothreonine.

Belongs to the protein prenyltransferase subunit beta family. In terms of assembly, heterodimer of FNTA and FNTB. It depends on Zn(2+) as a cofactor.

The enzyme catalyses L-cysteinyl-[protein] + (2E,6E)-farnesyl diphosphate = S-(2E,6E)-farnesyl-L-cysteinyl-[protein] + diphosphate. Functionally, essential subunit of the farnesyltransferase complex. Catalyzes the transfer of a farnesyl moiety from farnesyl diphosphate to a cysteine at the fourth position from the C-terminus of several proteins having the C-terminal sequence Cys-aliphatic-aliphatic-X. The sequence is that of Protein farnesyltransferase subunit beta (FNTB) from Homo sapiens (Human).